We begin with the raw amino-acid sequence, 353 residues long: Protein pelota homolog (353 aa).

Belongs to the eukaryotic release factor 1 family. Pelota subfamily. In terms of assembly, monomer. The cofactor is a divalent metal cation.

The protein resides in the cytoplasm. Its function is as follows. May function in recognizing stalled ribosomes, interact with stem-loop structures in stalled mRNA molecules, and effect endonucleolytic cleavage of the mRNA. May play a role in the release non-functional ribosomes and degradation of damaged mRNAs. Has endoribonuclease activity. In Methanopyrus kandleri (strain AV19 / DSM 6324 / JCM 9639 / NBRC 100938), this protein is Protein pelota homolog.